We begin with the raw amino-acid sequence, 881 residues long: Interference hedgehog (881 aa).

Residues 1–26 form the signal peptide; it reads MSSSSSSLLLMMLLLLLLLLTSKLEA. Topologically, residues 27-693 are extracellular; it reads IPVLSSTSPS…NHNETYSLNP (667 aa). 4 consecutive Ig-like C2-type domains span residues 37-138, 128-228, 242-330, and 336-425; these read PGVR…IARL, PLVV…IPSS, PYLL…YINV, and PVIV…LQVN. 3 disulfides stabilise this stretch: C60–C122, C167–C212, and C266–C314. 9 N-linked (GlcNAc...) asparagine glycosylation sites follow: N75, N98, N194, N201, N282, N349, N381, N430, and N455. C358 and C407 are disulfide-bonded. Fibronectin type-III domains follow at residues 450–558 and 566–661; these read PPSA…LQRG and VPEL…TQRS. 3 residues coordinate heparin: R486, K492, and K494. An N-linked (GlcNAc...) asparagine glycan is attached at N517. Heparin is bound at residue R532. The N-linked (GlcNAc...) asparagine glycan is linked to N548. Residues 655–685 are disordered; the sequence is QGRTQRSKLTTTEQPIQQKGGDRNVNTTPNH. Residues 656–671 are compositionally biased toward polar residues; that stretch reads GRTQRSKLTTTEQPIQ. N686 carries N-linked (GlcNAc...) asparagine glycosylation. Residues 694 to 714 form a helical membrane-spanning segment; that stretch reads LLTGTIGGGALLLLLLIAFSF. Residues 715-881 lie on the Cytoplasmic side of the membrane; that stretch reads CLCRRKNRNG…SSGSLNSVGV (167 aa). Disordered stretches follow at residues 768–791 and 809–881; these read NPLD…NSPH and PTTY…SVGV. Over residues 837–855 the composition is skewed to polar residues; it reads PGSNNNLQQIGSETTTTGQ. The span at 865–881 shows a compositional bias: low complexity; that stretch reads SSRSENLSSGSLNSVGV.

This sequence belongs to the immunoglobulin superfamily. IHOG family. Homodimer. Heterotetramer; 2 iHog chains bind 2 hh chains when facilitated by heparin, heparin is required to promote high-affinity interactions between hh and iHog.

It is found in the membrane. Functionally, mediates response to the active Hedgehog (Hh) protein signal in embryos, functioning upstream or at the level of patched (ptc). The chain is Interference hedgehog from Drosophila willistoni (Fruit fly).